We begin with the raw amino-acid sequence, 204 residues long: Small ribosomal subunit protein uS7 (204 aa).

Residue M1 is modified to N-acetylmethionine. An N-acetylthreonine; in 40S ribosomal protein S5, N-terminally processed modification is found at T2. T14 is modified (phosphothreonine). Position 47 is an N6-acetyllysine; alternate (K47). Residue K47 forms a Glycyl lysine isopeptide (Lys-Gly) (interchain with G-Cter in SUMO2); alternate linkage. S142 carries the phosphoserine modification.

It belongs to the universal ribosomal protein uS7 family. In terms of assembly, component of the small ribosomal subunit. Part of the small subunit (SSU) processome, composed of more than 70 proteins and the RNA chaperone small nucleolar RNA (snoRNA) U3.

It is found in the cytoplasm. It localises to the nucleus. Its subcellular location is the nucleolus. Its function is as follows. Component of the small ribosomal subunit. The ribosome is a large ribonucleoprotein complex responsible for the synthesis of proteins in the cell. Part of the small subunit (SSU) processome, first precursor of the small eukaryotic ribosomal subunit. During the assembly of the SSU processome in the nucleolus, many ribosome biogenesis factors, an RNA chaperone and ribosomal proteins associate with the nascent pre-rRNA and work in concert to generate RNA folding, modifications, rearrangements and cleavage as well as targeted degradation of pre-ribosomal RNA by the RNA exosome. In Mus musculus (Mouse), this protein is Small ribosomal subunit protein uS7 (Rps5).